The sequence spans 44 residues: Protein PsbN (44 aa).

Residues 7-29 (FFTTFLGCLLLSITGYSIYVGFG) traverse the membrane as a helical segment.

The protein belongs to the PsbN family.

The protein localises to the plastid. It is found in the chloroplast thylakoid membrane. In terms of biological role, may play a role in photosystem I and II biogenesis. The chain is Protein PsbN from Pleurastrum terricola (Filamentous green alga).